The primary structure comprises 260 residues: Oxidoreductase macE (260 aa).

This sequence belongs to the oxidoreductase OpS7 family.

It functions in the pathway secondary metabolite biosynthesis; terpenoid biosynthesis. Oxidoreductase; part of the gene cluster that mediates the biosynthesis of macrophorins, isoprenoid epoxycyclohexenones containing cyclized drimane moieties. The first step of the pathway is the synthesis of 6-methylsalicylic acid (6-MSA) by the polyketide synthase macA. 6-MSA is then converted to m-cresol by the decarboxylase macB. The cytochrome P450 monooxygenase macC then catalyzes the oxidation of m-cresol to toluquinol. Epoxidation of toluquinol is then performed by the short chain dehydrogenase macD, with the help of macE, and a further prenylation by macG leads to 7-deacetoxyyanuthone A. The next step is the hydroxylation of C-22 of 7-deacetoxyyanuthone A by the cytochrome P450 monooxygenase macH to yield 22-deacetylyanuthone A. O-Mevalon transferase macI then attaches mevalon to the hydroxyl group of 22-deacetylyanuthone A to produce yanuthone E. The terpene cyclase macJ catalyzes the cyclization of 22-deacetylyanuthone A to macrophorin A. MacJ is also able to catalyze cyclization of yanuthone E and 7-deacetoxyyanuthone A to their corresponding macrophorins. The macJ products can be further modified by macH and macJ, as well as by the FAD-dependent monooxygenase macF, to produce additional macrophorins, including 4'-oxomacrophorin A, 4'-oxomacrophorin D and 4'-oxomacrophorin E. The sequence is that of Oxidoreductase macE from Penicillium terrestre.